We begin with the raw amino-acid sequence, 285 residues long: Ribosomal RNA small subunit methyltransferase A (285 aa).

His-27, Leu-29, Gly-54, Glu-75, Asp-100, and Asn-120 together coordinate S-adenosyl-L-methionine.

The protein belongs to the class I-like SAM-binding methyltransferase superfamily. rRNA adenine N(6)-methyltransferase family. RsmA subfamily.

It localises to the cytoplasm. It carries out the reaction adenosine(1518)/adenosine(1519) in 16S rRNA + 4 S-adenosyl-L-methionine = N(6)-dimethyladenosine(1518)/N(6)-dimethyladenosine(1519) in 16S rRNA + 4 S-adenosyl-L-homocysteine + 4 H(+). In terms of biological role, specifically dimethylates two adjacent adenosines (A1518 and A1519) in the loop of a conserved hairpin near the 3'-end of 16S rRNA in the 30S particle. May play a critical role in biogenesis of 30S subunits. The protein is Ribosomal RNA small subunit methyltransferase A of Phenylobacterium zucineum (strain HLK1).